The primary structure comprises 463 residues: L-seryl-tRNA(Sec) selenium transferase (463 aa).

At lysine 295 the chain carries N6-(pyridoxal phosphate)lysine.

It belongs to the SelA family. As to quaternary structure, homodecamer; pentamer of dimers. Binds only one seryl-tRNA(Sec) per dimer. Pyridoxal 5'-phosphate serves as cofactor.

Its subcellular location is the cytoplasm. The catalysed reaction is L-seryl-tRNA(Sec) + selenophosphate + H(+) = L-selenocysteinyl-tRNA(Sec) + phosphate. The protein operates within aminoacyl-tRNA biosynthesis; selenocysteinyl-tRNA(Sec) biosynthesis; selenocysteinyl-tRNA(Sec) from L-seryl-tRNA(Sec) (bacterial route): step 1/1. Functionally, converts seryl-tRNA(Sec) to selenocysteinyl-tRNA(Sec) required for selenoprotein biosynthesis. The sequence is that of L-seryl-tRNA(Sec) selenium transferase from Photorhabdus laumondii subsp. laumondii (strain DSM 15139 / CIP 105565 / TT01) (Photorhabdus luminescens subsp. laumondii).